A 166-amino-acid chain; its full sequence is Cofilin-1 (166 aa).

An N-acetylalanine modification is found at Ala-2. Phosphoserine; by NRK is present on Ser-3. Positions 4–153 (GVAVSDGVIK…KDRCTLAEKL (150 aa)) constitute an ADF-H domain. The residue at position 8 (Ser-8) is a Phosphoserine. An N6-acetyllysine modification is found at Lys-13. Thr-25 is subject to Phosphothreonine. The short motif at 30-34 (KKRKK) is the Nuclear localization signal element. At Ser-41 the chain carries Phosphoserine. The residue at position 63 (Thr-63) is a Phosphothreonine. Tyr-68 is modified (phosphotyrosine). Residue Lys-73 is modified to N6-acetyllysine. At Tyr-82 the chain carries Phosphotyrosine. The residue at position 108 (Ser-108) is a Phosphoserine. A Glycyl lysine isopeptide (Lys-Gly) (interchain with G-Cter in SUMO2) cross-link involves residue Lys-132. A Phosphotyrosine modification is found at Tyr-140. N6-acetyllysine is present on Lys-144. Ser-156 carries the post-translational modification Phosphoserine.

The protein belongs to the actin-binding proteins ADF family. Can bind G- and F-actin in a 1:1 ratio of cofilin to actin. It is a major component of intranuclear and cytoplasmic actin rods. Interacts with the subcortical maternal complex (SCMC) via interaction with TLE6 isoform 1 and NLRP5. Interacts with C9orf72. In terms of assembly, (Microbial infection) Interacts with human respiratory syncytial virus (HRSV) matrix protein; this interaction probably facilitates viral replication. Post-translationally, inactivated by phosphorylation on Ser-3. Phosphorylated on Ser-3 in resting cells. Dephosphorylated by PDXP/chronophin; this restores its activity in promoting actin filament depolymerization. The phosphorylation of Ser-24 may prevent recognition of the nuclear localization signal. Phosphorylated via a ARRB1-RAC1-LIMK1-PAK1 cascade upon active ligand stimulation of atypical chemokine receptor ACKR2. As to expression, widely distributed in various tissues.

Its subcellular location is the nucleus matrix. It is found in the cytoplasm. The protein localises to the cytoskeleton. It localises to the cell projection. The protein resides in the ruffle membrane. Its subcellular location is the lamellipodium membrane. It is found in the lamellipodium. The protein localises to the growth cone. It localises to the axon. Its function is as follows. Binds to F-actin and exhibits pH-sensitive F-actin depolymerizing activity. In conjunction with the subcortical maternal complex (SCMC), plays an essential role for zygotes to progress beyond the first embryonic cell divisions via regulation of actin dynamics. Required for the centralization of the mitotic spindle and symmetric division of zygotes. Plays a role in the regulation of cell morphology and cytoskeletal organization in epithelial cells. Required for the up-regulation of atypical chemokine receptor ACKR2 from endosomal compartment to cell membrane, increasing its efficiency in chemokine uptake and degradation. Required for neural tube morphogenesis and neural crest cell migration. This Homo sapiens (Human) protein is Cofilin-1 (CFL1).